A 411-amino-acid polypeptide reads, in one-letter code: Serine hydroxymethyltransferase (411 aa).

Residues leucine 119 and 123–125 (GHL) contribute to the (6S)-5,6,7,8-tetrahydrofolate site. N6-(pyridoxal phosphate)lysine is present on lysine 228. Residue 351–353 (SPF) coordinates (6S)-5,6,7,8-tetrahydrofolate.

This sequence belongs to the SHMT family. In terms of assembly, homodimer. Pyridoxal 5'-phosphate serves as cofactor.

Its subcellular location is the cytoplasm. It catalyses the reaction (6R)-5,10-methylene-5,6,7,8-tetrahydrofolate + glycine + H2O = (6S)-5,6,7,8-tetrahydrofolate + L-serine. It participates in one-carbon metabolism; tetrahydrofolate interconversion. Its pathway is amino-acid biosynthesis; glycine biosynthesis; glycine from L-serine: step 1/1. Catalyzes the reversible interconversion of serine and glycine with tetrahydrofolate (THF) serving as the one-carbon carrier. This reaction serves as the major source of one-carbon groups required for the biosynthesis of purines, thymidylate, methionine, and other important biomolecules. Also exhibits THF-independent aldolase activity toward beta-hydroxyamino acids, producing glycine and aldehydes, via a retro-aldol mechanism. This chain is Serine hydroxymethyltransferase, found in Clostridium beijerinckii (strain ATCC 51743 / NCIMB 8052) (Clostridium acetobutylicum).